We begin with the raw amino-acid sequence, 311 residues long: tRNA-cytidine(32) 2-sulfurtransferase (311 aa).

Positions 47–52 (SGGKDS) match the PP-loop motif motif. Residues Cys122, Cys125, and Cys213 each contribute to the [4Fe-4S] cluster site.

Belongs to the TtcA family. As to quaternary structure, homodimer. Mg(2+) is required as a cofactor. It depends on [4Fe-4S] cluster as a cofactor.

It localises to the cytoplasm. The catalysed reaction is cytidine(32) in tRNA + S-sulfanyl-L-cysteinyl-[cysteine desulfurase] + AH2 + ATP = 2-thiocytidine(32) in tRNA + L-cysteinyl-[cysteine desulfurase] + A + AMP + diphosphate + H(+). It participates in tRNA modification. Its function is as follows. Catalyzes the ATP-dependent 2-thiolation of cytidine in position 32 of tRNA, to form 2-thiocytidine (s(2)C32). The sulfur atoms are provided by the cysteine/cysteine desulfurase (IscS) system. The sequence is that of tRNA-cytidine(32) 2-sulfurtransferase from Shigella flexneri serotype 5b (strain 8401).